The primary structure comprises 386 residues: Succinate--CoA ligase [ADP-forming] subunit beta (386 aa).

Positions K9–A235 constitute an ATP-grasp domain. ATP is bound by residues K44, G51–G53, A93, and E98. Residues N190 and D204 each coordinate Mg(2+). Substrate-binding positions include N255 and G317–T319.

It belongs to the succinate/malate CoA ligase beta subunit family. As to quaternary structure, heterotetramer of two alpha and two beta subunits. Mg(2+) is required as a cofactor.

The enzyme catalyses succinate + ATP + CoA = succinyl-CoA + ADP + phosphate. It catalyses the reaction GTP + succinate + CoA = succinyl-CoA + GDP + phosphate. It functions in the pathway carbohydrate metabolism; tricarboxylic acid cycle; succinate from succinyl-CoA (ligase route): step 1/1. Succinyl-CoA synthetase functions in the citric acid cycle (TCA), coupling the hydrolysis of succinyl-CoA to the synthesis of either ATP or GTP and thus represents the only step of substrate-level phosphorylation in the TCA. The beta subunit provides nucleotide specificity of the enzyme and binds the substrate succinate, while the binding sites for coenzyme A and phosphate are found in the alpha subunit. The sequence is that of Succinate--CoA ligase [ADP-forming] subunit beta from Nocardioides sp. (strain ATCC BAA-499 / JS614).